Here is a 346-residue protein sequence, read N- to C-terminus: Biotin synthase (346 aa).

One can recognise a Radical SAM core domain in the interval 38 to 256 (QQVQVSTLLS…IAVARIMMPT (219 aa)). The [4Fe-4S] cluster site is built by Cys-53, Cys-57, and Cys-60. [2Fe-2S] cluster contacts are provided by Cys-97, Cys-128, Cys-188, and Arg-260.

Belongs to the radical SAM superfamily. Biotin synthase family. Homodimer. [4Fe-4S] cluster is required as a cofactor. The cofactor is [2Fe-2S] cluster.

It carries out the reaction (4R,5S)-dethiobiotin + (sulfur carrier)-SH + 2 reduced [2Fe-2S]-[ferredoxin] + 2 S-adenosyl-L-methionine = (sulfur carrier)-H + biotin + 2 5'-deoxyadenosine + 2 L-methionine + 2 oxidized [2Fe-2S]-[ferredoxin]. It functions in the pathway cofactor biosynthesis; biotin biosynthesis; biotin from 7,8-diaminononanoate: step 2/2. Catalyzes the conversion of dethiobiotin (DTB) to biotin by the insertion of a sulfur atom into dethiobiotin via a radical-based mechanism. The protein is Biotin synthase of Salmonella gallinarum (strain 287/91 / NCTC 13346).